We begin with the raw amino-acid sequence, 1000 residues long: Ribosome assembly protein 1 (1000 aa).

Residues 17 to 246 (ENIRNFTLLA…YEKKLGLKQK (230 aa)) enclose the tr-type G domain. GTP-binding positions include 26 to 33 (AHVDHGKT), 100 to 104 (DSPGH), and 154 to 157 (NKMD).

Belongs to the TRAFAC class translation factor GTPase superfamily. Classic translation factor GTPase family.

The protein localises to the cytoplasm. It carries out the reaction GTP + H2O = GDP + phosphate + H(+). Its activity is regulated as follows. GTPase activity is stimulated in the presence of 60S subunits. In terms of biological role, GTPase involved in the biogenesis of the 60S ribosomal subunit and translational activation of ribosomes. Together with sdo1, may trigger the GTP-dependent release of tif6 from 60S pre-ribosomes in the cytoplasm, thereby activating ribosomes for translation competence by allowing 80S ribosome assembly and facilitating tif6 recycling to the nucleus, where it is required for 60S rRNA processing and nuclear export. Inhibits GTPase activity of ribosome-bound EF-2. The chain is Ribosome assembly protein 1 (ria1) from Schizosaccharomyces pombe (strain 972 / ATCC 24843) (Fission yeast).